The following is a 497-amino-acid chain: L-arabinose isomerase (497 aa).

Residues E306, E333, H349, and H448 each contribute to the Mn(2+) site.

Belongs to the arabinose isomerase family. The cofactor is Mn(2+).

The catalysed reaction is beta-L-arabinopyranose = L-ribulose. Its pathway is carbohydrate degradation; L-arabinose degradation via L-ribulose; D-xylulose 5-phosphate from L-arabinose (bacterial route): step 1/3. Its function is as follows. Catalyzes the conversion of L-arabinose to L-ribulose. This is L-arabinose isomerase from Vibrio parahaemolyticus serotype O3:K6 (strain RIMD 2210633).